Reading from the N-terminus, the 176-residue chain is Ribosome maturation factor RimM (176 aa).

Residues lysine 99 to asparagine 174 form the PRC barrel domain.

This sequence belongs to the RimM family. In terms of assembly, binds ribosomal protein uS19.

It is found in the cytoplasm. Functionally, an accessory protein needed during the final step in the assembly of 30S ribosomal subunit, possibly for assembly of the head region. Essential for efficient processing of 16S rRNA. May be needed both before and after RbfA during the maturation of 16S rRNA. It has affinity for free ribosomal 30S subunits but not for 70S ribosomes. The chain is Ribosome maturation factor RimM from Leptospira interrogans serogroup Icterohaemorrhagiae serovar copenhageni (strain Fiocruz L1-130).